The following is an 844-amino-acid chain: NADPH-Fe(3+) oxidoreductase subunit alpha (844 aa).

The region spanning 1 to 78 (MVSLTIDGKD…GIKVTTQSEK (78 aa)) is the 2Fe-2S ferredoxin-type domain. 4 residues coordinate [2Fe-2S] cluster: C34, C45, C48, and C62. The region spanning 78–117 (KLSRIRQKIMELMLVNHPLDCPVCDAGGECDLQNACYGLG) is the 4Fe-4S His(Cys)3-ligated-type domain. 15 residues coordinate [4Fe-4S] cluster: H94, C98, C101, C107, C146, C149, C152, C186, C189, C192, C196, C222, C225, C229, and C256. 4Fe-4S ferredoxin-type domains are found at residues 137-168 (PLIESDPNRCILCEKCVKVDHEIVGCNAIRVV) and 177-206 (DTVDGNPLNCEFCGNCVAACPTGTLISKPF). The 4Fe-4S Mo/W bis-MGD-type domain maps to 215 to 270 (FTTTPSVCPFCATGCQIEYHSRNGRVERVTSDDSTYNSGNLCINGRFGYSYINSPD).

In terms of assembly, heterotetramer with 2 beta subunits. [4Fe-4S] cluster is required as a cofactor.

The protein localises to the cell inner membrane. Not regulated by FAD or FMN. The SfrAB enzymatic complex is probably involved in acetate metabolism and does not participate directly in the reduction of Fe(3+) chelates. May serve as a major route for NADP regeneration. This Geobacter sulfurreducens (strain DL-1 / KN400) protein is NADPH-Fe(3+) oxidoreductase subunit alpha (sfrA).